The primary structure comprises 202 residues: MSCSRPCVCSHGTSVEESTWYGFDFYPNLFYNDWLGTTTLPYNPERIPIRYINRPWPSLCWKVTVAVASLFLLLGVAALTTGYAVPPKLELVNESKFSSMEDPVADYNQALMTCRVVGATLCGVAGIMLAVCLFLIASGWMFQDIKAEPLVTETDSPVEVFRDEPEKLSPAFHETSSQSPFLTPPSPFGQQSVQTSQPQRDL.

2 helical membrane passes run 65 to 85 (VAVA…GYAV) and 116 to 136 (VVGA…LFLI). The disordered stretch occupies residues 162-202 (RDEPEKLSPAFHETSSQSPFLTPPSPFGQQSVQTSQPQRDL). Residues 188–202 (FGQQSVQTSQPQRDL) are compositionally biased toward polar residues.

Belongs to the VMP family. Expressed specifically in brain where it is widely expressed, with highest levels of expression in thalamus and hypothalamus. In brain, found in neural cell bodies and detected in many regions of the limbic system, such as the septum nucleus, horizontal and vertical limbs of the diagonal band, hippocampus, amygdaloid nucleus, and habernula nucleus. Also localizes to small vesicles found in the perinuclear region of Neuro2a and PC12 cells.

Its subcellular location is the membrane. Functionally, may play a role in maintenance and/or transport of vesicles. The protein is Neurensin-2 of Mus musculus (Mouse).